Reading from the N-terminus, the 352-residue chain is Biotin synthase (352 aa).

Residues 44–262 (NRVQVSTLLS…LAVARILMPQ (219 aa)) form the Radical SAM core domain. Positions 59, 63, and 66 each coordinate [4Fe-4S] cluster. Cys-103, Cys-134, Cys-194, and Arg-266 together coordinate [2Fe-2S] cluster.

Belongs to the radical SAM superfamily. Biotin synthase family. Homodimer. It depends on [4Fe-4S] cluster as a cofactor. [2Fe-2S] cluster is required as a cofactor.

The enzyme catalyses (4R,5S)-dethiobiotin + (sulfur carrier)-SH + 2 reduced [2Fe-2S]-[ferredoxin] + 2 S-adenosyl-L-methionine = (sulfur carrier)-H + biotin + 2 5'-deoxyadenosine + 2 L-methionine + 2 oxidized [2Fe-2S]-[ferredoxin]. Its pathway is cofactor biosynthesis; biotin biosynthesis; biotin from 7,8-diaminononanoate: step 2/2. Catalyzes the conversion of dethiobiotin (DTB) to biotin by the insertion of a sulfur atom into dethiobiotin via a radical-based mechanism. The chain is Biotin synthase from Pseudomonas savastanoi pv. phaseolicola (strain 1448A / Race 6) (Pseudomonas syringae pv. phaseolicola (strain 1448A / Race 6)).